We begin with the raw amino-acid sequence, 313 residues long: Pyrimidine-specific ribonucleoside hydrolase RihB (313 aa).

D11 (proton acceptor) is an active-site residue. 3 residues coordinate Ca(2+): D11, D16, and V124. Residues Q227 and H239 each coordinate substrate. Residue D240 coordinates Ca(2+).

The protein belongs to the IUNH family. RihB subfamily. Homotetramer. Ca(2+) serves as cofactor.

It catalyses the reaction a pyrimidine ribonucleoside + H2O = a pyrimidine nucleobase + D-ribose. Its function is as follows. Hydrolyzes cytidine or uridine to ribose and cytosine or uracil, respectively. Has a clear preference for cytidine over uridine. Strictly specific for ribonucleosides. The sequence is that of Pyrimidine-specific ribonucleoside hydrolase RihB from Shigella sonnei (strain Ss046).